Consider the following 970-residue polypeptide: Toxin subunit YenC2 (970 aa).

RHS repeat units follow at residues 168-182 (AGQC…GLIQ), 297-311 (GVVT…TQRL), 329-343 (LQDL…GNVL), 361-375 (VPEN…YQLV), 408-422 (NYTR…GNLM), 500-514 (DDSE…SQRI), 580-594 (NDQI…TCSS), 606-620 (SMEE…AVWA), and 640-654 (DATG…YYQP). Residues 610–690 (YYPYGGTAVW…PLRLTDPDGM (81 aa)) form an RHS-repeat associated core domain region. The deaminase domain stretch occupies residues 849 to 950 (TEAFITGIRS…YNCSGIISGL (102 aa)).

The protein belongs to the RHS family. Semipurified toxin complex consists of at least YenA1-YenA2-YenB-YenC1-YenC2-Chi1-Chi2. YenB and the N-terminus of YenC2 form a large hollow shell of beta-strands. The shell is closed at both ends, within which the C-terminus of YenC2 is probably found. The C-terminal region dissociates from the YenB-YenC2 complex at pH 4.5 but not 7.5. The Yen-TC:K9 subcomplex is about 26 nm tall and 22 nm in diameter with 5-fold symmetry and 5 copies of YenA1, YenA2, Chi1 and Chi2; the chitinase subunits may be solvent accessible on the exterior the complex. The Yen-TC:K9 subcomplex has no insecticidal activity. The native complex with additional YenB, YenC1 and YenC2 subunits is 16 nm taller and is insecticidal; the toxicity-conferring subunits are present at about 1 copy each.

It is found in the secreted. With respect to regulation, toxin complex is secreted when grown at 25 degrees Celsius or less; at higher temperatures the proteins are present intracellularly but not secreted. Its function is as follows. Part of an orally active toxin complex (TC) with strong insecticidal effects on larvae of the Coleoptera Costelytra zealandica, Acrossidius tasmania and Adoryphorus couloni and some Lepidoptera larvae. The TC has an endochitinase activity. The sequence is that of Toxin subunit YenC2 from Yersinia entomophaga.